The following is a 173-amino-acid chain: MAKETGTAKPARQKKEPQPLVIPKNATDEQRLKLERLMRNPDKPATVPERPKEWSPRSAPEFVRDVMGSSAGAGSGEFHVYRHLRRREYQRQEFLDGMSEKQRLDEEYKKKLIQNKMLEEERTAKRRLKRQKLKEKKKMCKKGKKEEKKEDKDGHTDPENSAESSDKSDLEDQ.

2 disordered regions span residues 1–59 (MAKE…PRSA) and 117–173 (MLEE…LEDQ). The segment covering 26-42 (ATDEQRLKLERLMRNPD) has biased composition (basic and acidic residues). Residues 50–142 (RPKEWSPRSA…LKEKKKMCKK (93 aa)) form a required for RNA-binding region. A coiled-coil region spans residues 99–150 (SEKQRLDEEYKKKLIQNKMLEEERTAKRRLKRQKLKEKKKMCKKGKKEEKKE). Positions 124–143 (AKRRLKRQKLKEKKKMCKKG) are enriched in basic residues. The required for nuclear localization stretch occupies residues 125-137 (KRRLKRQKLKEKK). Over residues 144–173 (KKEEKKEDKDGHTDPENSAESSDKSDLEDQ) the composition is skewed to basic and acidic residues.

Belongs to the PRKRIP1 family. In terms of assembly, component of the pre-catalytic and post-catalytic spliceosome complexes.

It localises to the nucleus. Its subcellular location is the nucleolus. Its function is as follows. Required for pre-mRNA splicing as component of the spliceosome. Binds double-stranded RNA. This is PRKR-interacting protein 1 homolog (prkrip1) from Xenopus laevis (African clawed frog).